The following is a 92-amino-acid chain: uncharacterized protein (92 aa).

This is an uncharacterized protein from Dictyostelium discoideum (Social amoeba).